A 55-amino-acid polypeptide reads, in one-letter code: MAKGAREKIKLESTAGTGHFYTTTKNKKTTPDKMLIMKFDPKARKHVEYKEIKLK.

This sequence belongs to the bacterial ribosomal protein bL33 family.

This Polaromonas sp. (strain JS666 / ATCC BAA-500) protein is Large ribosomal subunit protein bL33.